The sequence spans 186 residues: Elongation factor P (186 aa).

N6-(3,6-diaminohexanoyl)-5-hydroxylysine is present on K33.

The protein belongs to the elongation factor P family. In terms of processing, may be beta-lysylated on the epsilon-amino group of Lys-33 by the combined action of EpmA and EpmB, and then hydroxylated on the C5 position of the same residue by EpmC (if this protein is present). Lysylation is critical for the stimulatory effect of EF-P on peptide-bond formation. The lysylation moiety may extend toward the peptidyltransferase center and stabilize the terminal 3-CCA end of the tRNA. Hydroxylation of the C5 position on Lys-33 may allow additional potential stabilizing hydrogen-bond interactions with the P-tRNA.

The protein localises to the cytoplasm. It functions in the pathway protein biosynthesis; polypeptide chain elongation. Functionally, involved in peptide bond synthesis. Alleviates ribosome stalling that occurs when 3 or more consecutive Pro residues or the sequence PPG is present in a protein, possibly by augmenting the peptidyl transferase activity of the ribosome. Modification of Lys-33 is required for alleviation. The protein is Elongation factor P of Acidithiobacillus ferrooxidans (strain ATCC 23270 / DSM 14882 / CIP 104768 / NCIMB 8455) (Ferrobacillus ferrooxidans (strain ATCC 23270)).